We begin with the raw amino-acid sequence, 491 residues long: MKLQFKPVYLASIAIMAIGCTKEVTENDTSEISEVPTELRAAASSFYTPPGQNVRANKKNLVTDYGVNHNDQNDDSSKLNLAIKDLSDTGGILTLPKGKYYLTKIRMRSNVHLEIEKGTVIYPTKGLTPAKNHRIFDFASKTEEKIENASIVGKGGKFIVDLRGNSSKNQIVADVGNVTNFKISNFTIKDEKTIFASILVSFTDKAGNAWPHKGIIENIDQANAHTGYGLIQAYAADNILFNNLSCTGGVTLRLETDNLAMKTAKKGGVRDIFATKIKNTNGLTPVMFSPHFMENGKVTIDDVTAIGCAYAVRVEHGFIEIFDKGNRASADAFKNYIEGILGAGSVEVVYKRNNGRTWAARIANDFNEAAYNHSNPAVSGIKPGKFATSKVTNVKATYKGTGAKLKQAFLSYLPCSERSKVCRPGPDGFEYNGPSLGVTIDNTKRDNSLGNYNVNVSTSSVQGFPNNYVLNVKYNTPKVCNQNLGSITSCN.

The signal sequence occupies residues 1-19 (MKLQFKPVYLASIAIMAIG). C422 and C490 are oxidised to a cystine.

It belongs to the glycosyl hydrolase 82 family.

The protein resides in the secreted. The enzyme catalyses Endohydrolysis of 1,4-beta-D-linkages between D-galactose 4-sulfate and 3,6-anhydro-D-galactose-2-sulfate in iota-carrageenans.. Its function is as follows. Hydrolyzes iota-carrageenans, sulfated 1,3-alpha-1,4-beta galactans from red algal cell walls, with an inversion of anomeric configuration. Also active against hybrid iota-/nu-carrageenan, not active against kappa- or lambda-carrageenans. The chain is Iota-carrageenase from Zobellia galactanivorans (strain DSM 12802 / CCUG 47099 / CIP 106680 / NCIMB 13871 / Dsij).